We begin with the raw amino-acid sequence, 666 residues long: Spartin (666 aa).

An N-acetylmethionine modification is found at M1. The MIT domain occupies 16–94 (IREAYKKAFL…LQNVRTRLEI (79 aa)). The tract at residues 124–156 (EKLPEPQSFSSAPQHAEVNGNTSTPSAGAVAAP) is disordered. A compositionally biased stretch (low complexity) spans 146–156 (STPSAGAVAAP). Residues 190 to 380 (DSGEFSSVGE…QLDQGNKDVR (191 aa)) are ubiquitin-binding region (UBR) domain. The LC3-interacting region (LIR); mediates interaction with MAP1LC3A AND MAP1LC3C signature appears at 193–200 (EFSSVGEE). Positions 344–398 (EENEFQIPGRTRPSSDQLKEASGTDVKQLDQGNKDVRHKGKRGKRAKDTSSEEVN) are disordered. K362 participates in a covalent cross-link: Glycyl lysine isopeptide (Lys-Gly) (interchain with G-Cter in ubiquitin). A compositionally biased stretch (basic residues) spans 379 to 388 (VRHKGKRGKR). The 185-residue stretch at 427–611 (ILSGASWVSW…YNINNIGIKA (185 aa)) folds into the Senescence domain. Residues 431 to 503 (ASWVSWGLVK…LVDGVCTVAN (73 aa)) are required for localization to lipid droplets. A Phosphoserine modification is found at S470. The disordered stretch occupies residues 636–666 (RENQEGAANVNVRGEKDEQTKEVKEAKKKDK). Residues 648–666 (RGEKDEQTKEVKEAKKKDK) show a composition bias toward basic and acidic residues.

In terms of assembly, interacts with ITCH and WWP1. Interacts (via MIT domain) with IST1; leading to the recruitment of SPART to midbodies. Interacts with MAP1LC3A and MAP1LC3C. Ubiquitinated; ubiquitination does not require ITCH and WWP1. As to expression, ubiquitously expressed, with highest levels of expression detected in adipose tissue.

The protein localises to the cytoplasm. The protein resides in the midbody. It localises to the lipid droplet. In terms of biological role, lipophagy receptor that plays an important role in lipid droplet (LD) turnover in motor neurons. Localizes to LDs and interacts with components of the autophagy machinery, such as MAP1LC3A/C proteins to deliver LDs to autophagosomes for degradation via lipophagy. Lipid transfer protein required for lipid droplet degradation, including by lipophagy. Can bind and transfer all lipid species found in lipid droplets, from phospholipids to triglycerides and sterol esters but the direction of lipid transfer by spartin and its cargos are unknown. May be implicated in endosomal trafficking, or microtubule dynamics, or both. Participates in cytokinesis. The sequence is that of Spartin from Homo sapiens (Human).